The chain runs to 1207 residues: DNA-directed RNA polymerase subunit beta' (1207 aa).

Positions 60, 62, 75, and 78 each coordinate Zn(2+). Asp450, Asp452, and Asp454 together coordinate Mg(2+). Cys819, Cys893, Cys900, and Cys903 together coordinate Zn(2+).

This sequence belongs to the RNA polymerase beta' chain family. As to quaternary structure, the RNAP catalytic core consists of 2 alpha, 1 beta, 1 beta' and 1 omega subunit. When a sigma factor is associated with the core the holoenzyme is formed, which can initiate transcription. Requires Mg(2+) as cofactor. Zn(2+) serves as cofactor.

It catalyses the reaction RNA(n) + a ribonucleoside 5'-triphosphate = RNA(n+1) + diphosphate. In terms of biological role, DNA-dependent RNA polymerase catalyzes the transcription of DNA into RNA using the four ribonucleoside triphosphates as substrates. The protein is DNA-directed RNA polymerase subunit beta' of Streptococcus pyogenes serotype M3 (strain ATCC BAA-595 / MGAS315).